We begin with the raw amino-acid sequence, 511 residues long: Cytochrome P450 705A5 (511 aa).

Residues 12 to 30 (CFIFLLLCLFSRLSYDLFF) traverse the membrane as a helical segment. A heme-binding site is contributed by cysteine 454.

This sequence belongs to the cytochrome P450 family. Heme serves as cofactor. Expressed primarily in the root epidermis.

It localises to the membrane. Functionally, converts thalian-diol to a desaturated thalian-diol. This chain is Cytochrome P450 705A5 (CYP705A5), found in Arabidopsis thaliana (Mouse-ear cress).